We begin with the raw amino-acid sequence, 371 residues long: UDP-N-acetylglucosamine--N-acetylmuramyl-(pentapeptide) pyrophosphoryl-undecaprenol N-acetylglucosamine transferase (371 aa).

UDP-N-acetyl-alpha-D-glucosamine-binding positions include T10–G12, N124, R166, S196, and Q301.

It belongs to the glycosyltransferase 28 family. MurG subfamily.

Its subcellular location is the cell membrane. The enzyme catalyses di-trans,octa-cis-undecaprenyl diphospho-N-acetyl-alpha-D-muramoyl-L-alanyl-D-glutamyl-meso-2,6-diaminopimeloyl-D-alanyl-D-alanine + UDP-N-acetyl-alpha-D-glucosamine = di-trans,octa-cis-undecaprenyl diphospho-[N-acetyl-alpha-D-glucosaminyl-(1-&gt;4)]-N-acetyl-alpha-D-muramoyl-L-alanyl-D-glutamyl-meso-2,6-diaminopimeloyl-D-alanyl-D-alanine + UDP + H(+). Its pathway is cell wall biogenesis; peptidoglycan biosynthesis. Cell wall formation. Catalyzes the transfer of a GlcNAc subunit on undecaprenyl-pyrophosphoryl-MurNAc-pentapeptide (lipid intermediate I) to form undecaprenyl-pyrophosphoryl-MurNAc-(pentapeptide)GlcNAc (lipid intermediate II). The protein is UDP-N-acetylglucosamine--N-acetylmuramyl-(pentapeptide) pyrophosphoryl-undecaprenol N-acetylglucosamine transferase of Moorella thermoacetica (strain ATCC 39073 / JCM 9320).